A 512-amino-acid polypeptide reads, in one-letter code: Keratin, type I cytoskeletal 24 (512 aa).

The interval 1 to 21 (MFCSAQKGSCSSRVSSSGAVG) is disordered. Positions 1-140 (MFCSAQKGSC…GYDGGLLSGS (140 aa)) are head. The segment covering 8–21 (GSCSSRVSSSGAVG) has biased composition (low complexity). Residues 141-176 (EKQTMQDLNDRLANYLDKVRALEEANTDLECKIKDW) form a coil 1A region. An IF rod domain is found at 141–455 (EKQTMQDLND…RLLNGDGGGC (315 aa)). The interval 177 to 197 (YGKHGSVKGGSGRDYSQYYSI) is linker 1. The coil 1B stretch occupies residues 198-289 (IEDLKKQILS…KNHEEEMKCM (92 aa)). Positions 290–312 (QGSSGGDVTVEMNAAPGVDLTKL) are linker 12. A coil 2 region spans residues 313 to 451 (LNDMRAQYEA…ETYRRLLNGD (139 aa)). The tract at residues 452–512 (GGGCDYRNLV…VSNISEVKIK (61 aa)) is tail.

This sequence belongs to the intermediate filament family. As to quaternary structure, heterotetramer of two type I and two type II keratins.

This chain is Keratin, type I cytoskeletal 24 (Krt24), found in Mus musculus (Mouse).